The following is a 27-amino-acid chain: Peptide Cn29 (27 aa).

3 disulfide bridges follow: cysteine 2-cysteine 23, cysteine 5-cysteine 18, and cysteine 12-cysteine 25.

As to expression, expressed by the venom gland.

It is found in the secreted. This chain is Peptide Cn29, found in Centruroides noxius (Mexican scorpion).